The following is a 27-amino-acid chain: M-ectatotoxin-Eb2a (27 aa).

Expressed by the venom gland.

It is found in the secreted. In terms of biological role, antimicrobial peptide forming an alpha-helix in watery and membraneous environments, enabling it to perforate membranes. Active against Gram-negative bacteria E.coli DH5alpha (MIC=5 uM), E.coli MH1 (MIC=0.6 uM) and P.aeruginosa PAO1 (MIC=10 uM) and against Gram-positive bacteria B.subtilis VKM B-501 (MIC=0.6 uM) and A.globiformis VKM Ac-1112 (MIC=0.2 uM). Has cytolytic and hemolytic activity. The chain is M-ectatotoxin-Eb2a from Ectatomma brunneum (Ant).